The primary structure comprises 226 residues: Ribosomal RNA small subunit methyltransferase G (226 aa).

Residues glycine 95, leucine 100, 146-147 (VE), and arginine 159 contribute to the S-adenosyl-L-methionine site.

Belongs to the methyltransferase superfamily. RNA methyltransferase RsmG family.

Its subcellular location is the cytoplasm. The catalysed reaction is guanosine(527) in 16S rRNA + S-adenosyl-L-methionine = N(7)-methylguanosine(527) in 16S rRNA + S-adenosyl-L-homocysteine. Functionally, specifically methylates the N7 position of guanine in position 527 of 16S rRNA. The sequence is that of Ribosomal RNA small subunit methyltransferase G from Acidovorax ebreus (strain TPSY) (Diaphorobacter sp. (strain TPSY)).